The chain runs to 259 residues: Small ribosomal subunit protein uS2 (259 aa).

The protein belongs to the universal ribosomal protein uS2 family.

The chain is Small ribosomal subunit protein uS2 from Streptococcus pneumoniae serotype 2 (strain D39 / NCTC 7466).